Here is a 1068-residue protein sequence, read N- to C-terminus: Rho family-interacting cell polarization regulator 2 (1068 aa).

2 positions are modified to phosphoserine; in isoform: S21 and S37. The tract at residues 45 to 73 (LKKPQAKLKKMHNLGHKNNNPPKEPQPKR) is disordered. Residues 48-59 (PQAKLKKMHNLG) show a composition bias toward basic residues. The interval 55-113 (MHNLGHKNNNPPKEPQPKRVEEVYRALKNGLDEYLEVHQTELDKLTAQLKDMKRNSRLG) is involved in cell filopodia formation. Positions 83–112 (NGLDEYLEVHQTELDKLTAQLKDMKRNSRL) form a coiled coil. S341 is modified (phosphoserine; in isoform 2). The segment covering 474–491 (QNEGMDDTSSASSRNSLG) has biased composition (polar residues). The interval 474–524 (QNEGMDDTSSASSRNSLGEGQEPKSHLKEEDPEEPRKPASAPSEACRRQSS) is disordered. Residues 494–510 (QEPKSHLKEEDPEEPRK) show a composition bias toward basic and acidic residues. S523 carries the phosphoserine; in isoform 2 modification. S573 is subject to Phosphoserine. The residue at position 585 (S585) is a Phosphoserine; in isoform 2. Residues 768-793 (VARSLLEKLSRQIQVMEKLAAVSDEN) adopt a coiled-coil conformation.

Belongs to the RIPOR family. In terms of assembly, homooligomer; homooligomerization is regulated by RHOC and leads to the formation of concatemers through the association of N- and C-termini. Interacts with 14-3-3 proteins; these interactions occur during myogenic cell differentiation. Interacts with HDAC6; this interaction occurs during early myogenic differentiation and prevents HDAC6 to deacetylate tubulin. Interacts with DYSF; this interaction occurs during early myogenic differentiation. Interacts with MYOF. Interacts with RHOC. Isoform 1 and isoform 2 interact (via active GTP- or inactive GDP-bound forms) with RHOA; these interactions are direct, block the loading of GTP to RHOA and decrease upon chemokine CCL19 stimulation in primary T lymphocytes. Isoform 2 interacts (phosphorylated form) with HDAC6; this interaction induces T cell proliferation arrest. Isoform 2 interacts (phosphorylated form) with 14-3-3 proteins; these interactions induces T cell proliferation arrest. Isoform 2 interacts with 14-3-3 proteins. Isoform 2 interacts (via phosphorylated form) with YWHAB; this interaction occurs in a chemokine-dependent manner and does not compete for binding of RIPOR2 with RHOA nor blocks inhibition of RIPOR2-mediated RHOA activity. Isoform 2 interacts with YWHAE. Isoform 2 interacts with YWHAQ. Post-translationally, phosphorylated. Isoform 2 is phosphorylated in T cells. Chemokine-induced phosphorylation of isoform 2 in neutrophils occurs in a PKC- and AKT-dependent manner, resulting in RIPOR2 interaction with YWHAB and stabilization. Isoform 2 is phosphorylated by PKCA, AKT1 and MAPKAPK1A; in vitro. In terms of processing, acetylated during myogenic differentiation. In terms of tissue distribution, expressed in primary fetal mononuclear myoblast. Expressed strongly in naive T lymphocytes. Expressed weakly in activated T lymphocytes (at protein level). Expressed in blood cells and adult tissues of hematopoietic origin, such as the secondary lymphoid organs. Expressed in cytotrophoblast.

It is found in the cytoplasm. It localises to the cytoskeleton. Its subcellular location is the cell projection. The protein resides in the filopodium. The protein localises to the stereocilium. It is found in the stereocilium membrane. It localises to the apical cell membrane. Its function is as follows. Acts as an inhibitor of the small GTPase RHOA and plays several roles in the regulation of myoblast and hair cell differentiation, lymphocyte T proliferation and neutrophil polarization. Inhibits chemokine-induced T lymphocyte responses, such as cell adhesion, polarization and migration. Involved also in the regulation of neutrophil polarization, chemotaxis and adhesion. Required for normal development of inner and outer hair cell stereocilia within the cochlea of the inner ear. Plays a role for maintaining the structural organization of the basal domain of stereocilia. Involved in mechanosensory hair cell function. Required for normal hearing. Acts as an inhibitor of the small GTPase RHOA. Plays a role in fetal mononuclear myoblast differentiation by promoting filopodia and myotube formation. Maintains naive T lymphocytes in a quiescent state. This Homo sapiens (Human) protein is Rho family-interacting cell polarization regulator 2 (RIPOR2).